A 246-amino-acid chain; its full sequence is 5'-nucleotidase SurE (246 aa).

A divalent metal cation contacts are provided by Asp8, Asp9, Ser39, and Asn91.

Belongs to the SurE nucleotidase family. A divalent metal cation serves as cofactor.

The protein resides in the cytoplasm. The catalysed reaction is a ribonucleoside 5'-phosphate + H2O = a ribonucleoside + phosphate. Functionally, nucleotidase that shows phosphatase activity on nucleoside 5'-monophosphates. This Actinobacillus succinogenes (strain ATCC 55618 / DSM 22257 / CCUG 43843 / 130Z) protein is 5'-nucleotidase SurE.